The primary structure comprises 307 residues: MDEWMNYEQFDRQTWHGFFPTDSVRLTQGNLDEIKSLNDRISIEDVQDVYLPLIKLIQLRYQNFLEWQMQKANFLQRSTMRIPYIIGIAGSVAVGKSTIARLISILLNKMLPDKRVELMTTDGFLYPNAELKRRGIMDRKGFPESYDMERLLKFLNDVKAGEPVVKAPTYSHQVYDVQLDKPLVIDSPDILIVEGINTLQLPSNQQLYVSDYFDWSLYVDADPDLIEHWYLQRFGMLLDTAFTDPSNYYYPYSKGDRQEAFKMAKYVWQRVDLPNLREFILPTKSRADVILHKTTGHVVDKLYLRRG.

90–97 contacts ATP; it reads GSVAVGKS.

It belongs to the prokaryotic pantothenate kinase family.

It localises to the cytoplasm. The catalysed reaction is (R)-pantothenate + ATP = (R)-4'-phosphopantothenate + ADP + H(+). It participates in cofactor biosynthesis; coenzyme A biosynthesis; CoA from (R)-pantothenate: step 1/5. This chain is Pantothenate kinase, found in Limosilactobacillus reuteri subsp. reuteri (strain JCM 1112) (Lactobacillus reuteri).